A 142-amino-acid chain; its full sequence is Hemoglobin subunit alpha (142 aa).

Residues 2–142 (VLSSADKNNV…VSTVLTSKYR (141 aa)) enclose the Globin domain. Ser-4 bears the Phosphoserine mark. N6-succinyllysine is present on residues Lys-8 and Lys-12. Lys-17 is modified (N6-acetyllysine; alternate). At Lys-17 the chain carries N6-succinyllysine; alternate. Tyr-25 is subject to Phosphotyrosine. Ser-36 carries the phosphoserine modification. Position 41 is an N6-succinyllysine (Lys-41). Residue Ser-50 is modified to Phosphoserine. Position 59 (His-59) interacts with O2. His-88 is a heme b binding site. A Phosphoserine modification is found at Ser-103. At Thr-109 the chain carries Phosphothreonine. Ser-125 is subject to Phosphoserine. 2 positions are modified to phosphothreonine: Thr-135 and Thr-138. At Ser-139 the chain carries Phosphoserine.

It belongs to the globin family. In terms of assembly, heterotetramer of two alpha chains and two beta chains. In terms of tissue distribution, red blood cells.

Functionally, involved in oxygen transport from the lung to the various peripheral tissues. Hemopressin acts as an antagonist peptide of the cannabinoid receptor CNR1. Hemopressin-binding efficiently blocks cannabinoid receptor CNR1 and subsequent signaling. The sequence is that of Hemoglobin subunit alpha (HBA) from Panthera leo (Lion).